A 487-amino-acid chain; its full sequence is Uronate isomerase (487 aa).

This sequence belongs to the metallo-dependent hydrolases superfamily. Uronate isomerase family.

It carries out the reaction D-glucuronate = D-fructuronate. The enzyme catalyses aldehydo-D-galacturonate = keto-D-tagaturonate. It participates in carbohydrate metabolism; pentose and glucuronate interconversion. The protein is Uronate isomerase of Caulobacter vibrioides (strain ATCC 19089 / CIP 103742 / CB 15) (Caulobacter crescentus).